Reading from the N-terminus, the 350-residue chain is S-adenosylmethionine:tRNA ribosyltransferase-isomerase (350 aa).

Belongs to the QueA family. In terms of assembly, monomer.

The protein localises to the cytoplasm. The enzyme catalyses 7-aminomethyl-7-carbaguanosine(34) in tRNA + S-adenosyl-L-methionine = epoxyqueuosine(34) in tRNA + adenine + L-methionine + 2 H(+). It functions in the pathway tRNA modification; tRNA-queuosine biosynthesis. Its function is as follows. Transfers and isomerizes the ribose moiety from AdoMet to the 7-aminomethyl group of 7-deazaguanine (preQ1-tRNA) to give epoxyqueuosine (oQ-tRNA). In Bacillus mycoides (strain KBAB4) (Bacillus weihenstephanensis), this protein is S-adenosylmethionine:tRNA ribosyltransferase-isomerase.